Consider the following 313-residue polypeptide: Nucleoside diphosphate-linked moiety X motif 6 (313 aa).

Residues 138-270 (THQVGVAGAV…TSRVARLLLY (133 aa)) enclose the Nudix hydrolase domain.

The protein belongs to the Nudix hydrolase family. As to quaternary structure, monomer and homodimer.

The protein localises to the cytoplasm. It localises to the nucleus. Its subcellular location is the mitochondrion. Functionally, may contribute to the regulation of cell proliferation. This chain is Nucleoside diphosphate-linked moiety X motif 6 (Nudt6), found in Mus musculus (Mouse).